The sequence spans 286 residues: Shikimate dehydrogenase (NADP(+)) (286 aa).

Residues 20-22 (SLS) and T65 each bind shikimate. The Proton acceptor role is filled by K69. D81 serves as a coordination point for NADP(+). Residues N90 and D105 each contribute to the shikimate site. Residues 128-132 (GAGGA) and T217 each bind NADP(+). A shikimate-binding site is contributed by Y219. G240 contacts NADP(+).

Belongs to the shikimate dehydrogenase family. As to quaternary structure, homodimer.

The catalysed reaction is shikimate + NADP(+) = 3-dehydroshikimate + NADPH + H(+). Its pathway is metabolic intermediate biosynthesis; chorismate biosynthesis; chorismate from D-erythrose 4-phosphate and phosphoenolpyruvate: step 4/7. In terms of biological role, involved in the biosynthesis of the chorismate, which leads to the biosynthesis of aromatic amino acids. Catalyzes the reversible NADPH linked reduction of 3-dehydroshikimate (DHSA) to yield shikimate (SA). This is Shikimate dehydrogenase (NADP(+)) from Syntrophobacter fumaroxidans (strain DSM 10017 / MPOB).